Reading from the N-terminus, the 450-residue chain is F-box/FBD/LRR-repeat protein At5g22660 (450 aa).

The F-box domain occupies 12-58 (EDRISSLPDHLLSQILSNLPTENAVTTSILSTRWKDLWLSTPVLDID). LRR repeat units lie at residues 157–181 (LPNLKVMHLEENIYSYAETMEKFIS) and 294–317 (LSSLRDMTISGTTLKIICHYLKHE). In terms of domain architecture, FBD spans 364-416 (EEISLSSSVPKCLQSSLENVEIIRPNYGSGEEMKLSKYFLENSLVLKKFKLCR).

In Arabidopsis thaliana (Mouse-ear cress), this protein is F-box/FBD/LRR-repeat protein At5g22660.